The sequence spans 191 residues: Peptidyl-tRNA hydrolase (191 aa).

Residue tyrosine 14 participates in tRNA binding. Residue histidine 19 is the Proton acceptor of the active site. Residues tyrosine 64, asparagine 66, and asparagine 112 each coordinate tRNA.

The protein belongs to the PTH family. Monomer.

The protein localises to the cytoplasm. The catalysed reaction is an N-acyl-L-alpha-aminoacyl-tRNA + H2O = an N-acyl-L-amino acid + a tRNA + H(+). Its function is as follows. Hydrolyzes ribosome-free peptidyl-tRNAs (with 1 or more amino acids incorporated), which drop off the ribosome during protein synthesis, or as a result of ribosome stalling. Catalyzes the release of premature peptidyl moieties from peptidyl-tRNA molecules trapped in stalled 50S ribosomal subunits, and thus maintains levels of free tRNAs and 50S ribosomes. The sequence is that of Peptidyl-tRNA hydrolase from Lachnoclostridium phytofermentans (strain ATCC 700394 / DSM 18823 / ISDg) (Clostridium phytofermentans).